The following is a 217-amino-acid chain: Thymidylate kinase (217 aa).

7–14 (GIEGAGKS) is an ATP binding site.

Belongs to the thymidylate kinase family.

The enzyme catalyses dTMP + ATP = dTDP + ADP. Phosphorylation of dTMP to form dTDP in both de novo and salvage pathways of dTTP synthesis. The polypeptide is Thymidylate kinase (Desulfovibrio desulfuricans (strain ATCC 27774 / DSM 6949 / MB)).